The sequence spans 255 residues: Probable membrane transporter protein HI_0198 (255 aa).

The next 8 helical transmembrane spans lie at 7 to 27 (LLAI…IAGG), 28 to 48 (GGLI…MALG), 76 to 96 (IWFI…LIQS), 99 to 119 (VAIF…YFLF), 132 to 152 (LSYL…DGFF), 153 to 173 (GPGT…FNLP), 191 to 211 (FALF…MMAG), and 235 to 255 (VVIM…WFHF).

This sequence belongs to the 4-toluene sulfonate uptake permease (TSUP) (TC 2.A.102) family.

The protein localises to the cell membrane. The sequence is that of Probable membrane transporter protein HI_0198 from Haemophilus influenzae (strain ATCC 51907 / DSM 11121 / KW20 / Rd).